Consider the following 201-residue polypeptide: Cold shock domain-containing protein 4 (201 aa).

Ser2 carries the post-translational modification N-acetylserine. One can recognise a CSD domain in the interval 14-81; the sequence is RRKGTVKWFD…RPKAIEVSGP (68 aa). The tract at residues 66-109 is disordered; the sequence is EVDNSGRPKAIEVSGPDGAPVQGNSGGGGSSGGRGGFGGGGGRG. Positions 89–109 are enriched in gly residues; it reads NSGGGGSSGGRGGFGGGGGRG. 2 CCHC-type zinc fingers span residues 136 to 153 and 180 to 197; these read NSCF…ECSQ and LSCY…DCTS.

This sequence belongs to the cold shock protein (CSP) family. Mostly expressed in shoot apices and siliques, and, to a lower extent, in roots, cotyledons, stems, shoots, leaves, floral buds and flowers. Present in shoot apical meristems and siliques (at protein level). Very low levels are observed in cv. Landsberg erecta compared to cv. Columbia.

It is found in the cytoplasm. Its subcellular location is the nucleus. The protein resides in the nucleolus. Its function is as follows. Chaperone that binds to and unwinds RNA and both single-stranded DNA and double-stranded DNA (ssDNA and dsDNA DNA). Regulates the flowering transition and flower and seed development, particularly at late stages of embryo development, through regulation of gene expression (including MEA, FIS2, AP1, CAL, AG and SHP2). In Arabidopsis thaliana (Mouse-ear cress), this protein is Cold shock domain-containing protein 4 (CSP4).